We begin with the raw amino-acid sequence, 102 residues long: Large ribosomal subunit protein uL24 (102 aa).

The protein belongs to the universal ribosomal protein uL24 family. In terms of assembly, part of the 50S ribosomal subunit.

Its function is as follows. One of two assembly initiator proteins, it binds directly to the 5'-end of the 23S rRNA, where it nucleates assembly of the 50S subunit. One of the proteins that surrounds the polypeptide exit tunnel on the outside of the subunit. In Leuconostoc mesenteroides subsp. mesenteroides (strain ATCC 8293 / DSM 20343 / BCRC 11652 / CCM 1803 / JCM 6124 / NCDO 523 / NBRC 100496 / NCIMB 8023 / NCTC 12954 / NRRL B-1118 / 37Y), this protein is Large ribosomal subunit protein uL24.